The chain runs to 185 residues: Large ribosomal subunit protein uL10 (185 aa).

Residues 165 to 185 are disordered; the sequence is LRAKKEEQGGAGTPAPAEAAE.

The protein belongs to the universal ribosomal protein uL10 family. As to quaternary structure, part of the ribosomal stalk of the 50S ribosomal subunit. The N-terminus interacts with L11 and the large rRNA to form the base of the stalk. The C-terminus forms an elongated spine to which L12 dimers bind in a sequential fashion forming a multimeric L10(L12)X complex.

In terms of biological role, forms part of the ribosomal stalk, playing a central role in the interaction of the ribosome with GTP-bound translation factors. This Streptomyces griseus subsp. griseus (strain JCM 4626 / CBS 651.72 / NBRC 13350 / KCC S-0626 / ISP 5235) protein is Large ribosomal subunit protein uL10.